Here is a 304-residue protein sequence, read N- to C-terminus: tRNA dimethylallyltransferase (304 aa).

Residue 10 to 17 (GPTASGKT) coordinates ATP. Position 12-17 (12-17 (TASGKT)) interacts with substrate. Interaction with substrate tRNA regions lie at residues 35–38 (DSAL), 159–163 (QRLSR), and 240–245 (RCVGYR).

Belongs to the IPP transferase family. Monomer. Requires Mg(2+) as cofactor.

It carries out the reaction adenosine(37) in tRNA + dimethylallyl diphosphate = N(6)-dimethylallyladenosine(37) in tRNA + diphosphate. Its function is as follows. Catalyzes the transfer of a dimethylallyl group onto the adenine at position 37 in tRNAs that read codons beginning with uridine, leading to the formation of N6-(dimethylallyl)adenosine (i(6)A). The polypeptide is tRNA dimethylallyltransferase (Shewanella putrefaciens (strain CN-32 / ATCC BAA-453)).